Here is a 456-residue protein sequence, read N- to C-terminus: CBL-interacting serine/threonine-protein kinase 2 (456 aa).

The 255-residue stretch at 12-266 folds into the Protein kinase domain; the sequence is YEVGRLLGQG…IAKIKESSWF (255 aa). ATP-binding positions include 18–26 and K41; that span reads LGQGTFAKV. Residue D134 is the Proton acceptor of the active site. Residues 152–181 are activation loop; sequence DFGLSALADCKRQDGLLHTTCGTPAYVAPE. At S156 the chain carries Phosphoserine. T170 carries the post-translational modification Phosphothreonine. The segment at 280 to 309 is disordered; sequence MEKQQVREATNPMEAGGSGQNENGENHEPP. An NAF domain is found at 309 to 333; that stretch reads PRLATLNAFDIIALSTGFGLAGLFG. The tract at residues 338 to 367 is PPI; sequence KRESRFASQKPASEIISKLVEVAKCLKLKI.

Belongs to the protein kinase superfamily. CAMK Ser/Thr protein kinase family. SNF1 subfamily. Interacts with CBL2, CBL3 and CBL5. It depends on Mn(2+) as a cofactor.

It catalyses the reaction L-seryl-[protein] + ATP = O-phospho-L-seryl-[protein] + ADP + H(+). It carries out the reaction L-threonyl-[protein] + ATP = O-phospho-L-threonyl-[protein] + ADP + H(+). Its function is as follows. CIPK serine-threonine protein kinases interact with CBL proteins. Binding of a CBL protein to the regulatory NAF domain of CIPK protein lead to the activation of the kinase in a calcium-dependent manner. The protein is CBL-interacting serine/threonine-protein kinase 2 (CIPK2) of Arabidopsis thaliana (Mouse-ear cress).